Here is a 404-residue protein sequence, read N- to C-terminus: Acetate kinase (404 aa).

Asparagine 7 contacts Mg(2+). An ATP-binding site is contributed by lysine 14. Residue arginine 98 coordinates substrate. Aspartate 155 acts as the Proton donor/acceptor in catalysis. ATP-binding positions include 214–218 (HLGNG), 289–291 (DLR), and 337–341 (GIGEN). Position 390 (glutamate 390) interacts with Mg(2+).

This sequence belongs to the acetokinase family. As to quaternary structure, homodimer. It depends on Mg(2+) as a cofactor. Requires Mn(2+) as cofactor.

It is found in the cytoplasm. The catalysed reaction is acetate + ATP = acetyl phosphate + ADP. Its pathway is metabolic intermediate biosynthesis; acetyl-CoA biosynthesis; acetyl-CoA from acetate: step 1/2. In terms of biological role, catalyzes the formation of acetyl phosphate from acetate and ATP. Can also catalyze the reverse reaction. The chain is Acetate kinase from Rippkaea orientalis (strain PCC 8801 / RF-1) (Cyanothece sp. (strain PCC 8801)).